The chain runs to 233 residues: Purine nucleoside phosphorylase DeoD-type (233 aa).

His4 is a binding site for a purine D-ribonucleoside. Residues Gly20, Arg24, Arg43, and 87–90 (RIGT) each bind phosphate. A purine D-ribonucleoside contacts are provided by residues 179 to 181 (EME) and 203 to 204 (SD). Asp204 functions as the Proton donor in the catalytic mechanism.

This sequence belongs to the PNP/UDP phosphorylase family. Homohexamer; trimer of homodimers.

It carries out the reaction a purine D-ribonucleoside + phosphate = a purine nucleobase + alpha-D-ribose 1-phosphate. It catalyses the reaction a purine 2'-deoxy-D-ribonucleoside + phosphate = a purine nucleobase + 2-deoxy-alpha-D-ribose 1-phosphate. Catalyzes the reversible phosphorolytic breakdown of the N-glycosidic bond in the beta-(deoxy)ribonucleoside molecules, with the formation of the corresponding free purine bases and pentose-1-phosphate. This Thermoanaerobacter pseudethanolicus (strain ATCC 33223 / 39E) (Clostridium thermohydrosulfuricum) protein is Purine nucleoside phosphorylase DeoD-type.